The sequence spans 926 residues: Alpha-L-rhamnosidase (926 aa).

Positions 1–25 are cleaved as a signal peptide; that stretch reads MILHKSVFKSYIYVLTYFVFFSVMS. Cys-26 carries the N-palmitoyl cysteine lipid modification. Cys-26 carries the S-diacylglycerol cysteine lipid modification. Alpha-L-rhamnose contacts are provided by residues Asp-504, 508 to 510, Asp-517, and Trp-569; that span reads RDE. The active-site Proton donor is Glu-510. Catalysis depends on Glu-779, which acts as the Proton acceptor. His-800 contacts alpha-L-rhamnose.

It belongs to the glycosyl hydrolase 78 family.

It is found in the cell membrane. It carries out the reaction Hydrolysis of terminal non-reducing alpha-L-rhamnose residues in alpha-L-rhamnosides.. In terms of biological role, alpha-L-rhamnosidase involved in ulvan degradation. Ulvan is the main polysaccharide component of the Ulvales (green seaweed) cell wall. It is composed of disaccharide building blocks comprising 3-sulfated rhamnose (Rha3S) linked to D-glucuronic acid (GlcA), L-iduronic acid (IduA), or D-xylose (Xyl). Alpha-L-rhamnosidase converts Rha-Xyl-Rha3S, the product of a sulfatase acting on Rha3S-Xyl-Rha3S oligosaccharides, to Rha and Xyl-Rha3S. The enzyme is able to degrade p-nitrophenyl-alpha-L-rhamnopyranoside (PNP-Rha) in vitro. The sequence is that of Alpha-L-rhamnosidase from Formosa agariphila (strain DSM 15362 / KCTC 12365 / LMG 23005 / KMM 3901 / M-2Alg 35-1).